The following is a 409-amino-acid chain: Elongation factor Tu (409 aa).

Residues 10-214 (KPHVNIGTIG…AVDSYIPDPE (205 aa)) enclose the tr-type G domain. Residues 19–26 (GHVDHGKT) are G1. Residue 19–26 (GHVDHGKT) participates in GTP binding. Position 26 (Thr26) interacts with Mg(2+). The tract at residues 60-64 (GITIN) is G2. The interval 81-84 (DCPG) is G3. GTP is bound by residues 81-85 (DCPGH) and 136-139 (NKED). A G4 region spans residues 136–139 (NKED). Residues 174–176 (SGL) are G5.

Monomer.

The protein resides in the cytoplasm. It catalyses the reaction GTP + H2O = GDP + phosphate + H(+). Functionally, GTP hydrolase that promotes the GTP-dependent binding of aminoacyl-tRNA to the A-site of ribosomes during protein biosynthesis. In Nostoc sp. (strain PCC 7120 / SAG 25.82 / UTEX 2576), this protein is Elongation factor Tu.